The primary structure comprises 232 residues: LexA repressor (232 aa).

Residues 1–25 form a disordered region; the sequence is MSDDSSDSTSGAGSGRGRDSGLTER. The span at 16–25 shows a compositional bias: basic and acidic residues; the sequence is RGRDSGLTER. A DNA-binding region (H-T-H motif) is located at residues 46–66; that stretch reads IREIGDAVGLTSTSSVAHQLR. Residues S156 and K193 each act as for autocatalytic cleavage activity in the active site.

Belongs to the peptidase S24 family. In terms of assembly, homodimer.

It catalyses the reaction Hydrolysis of Ala-|-Gly bond in repressor LexA.. Represses a number of genes involved in the response to DNA damage (SOS response), including recA and lexA. In the presence of single-stranded DNA, RecA interacts with LexA causing an autocatalytic cleavage which disrupts the DNA-binding part of LexA, leading to derepression of the SOS regulon and eventually DNA repair. This Mycolicibacterium vanbaalenii (strain DSM 7251 / JCM 13017 / BCRC 16820 / KCTC 9966 / NRRL B-24157 / PYR-1) (Mycobacterium vanbaalenii) protein is LexA repressor.